A 487-amino-acid chain; its full sequence is Cytochrome c-552 (487 aa).

The signal sequence occupies residues 1 to 27 (MSKKWTRNTAAMAAILSALCLSTNALA). His104 is a binding site for heme c. 3 residues coordinate heme: Cys132, Cys135, and Lys136. Cys170, Cys173, His174, Cys219, Cys222, and His223 together coordinate heme c. Residues Glu225, Tyr226, Lys271, and Gln273 each contribute to the Ca(2+) site. Tyr226 is a substrate binding site. His274 serves as a coordination point for substrate. Heme c-binding residues include His285, Cys292, Cys295, His296, His311, Cys324, Cys327, His328, and His403.

It belongs to the cytochrome c-552 family. The cofactor is Ca(2+). Heme c serves as cofactor.

It is found in the periplasm. The enzyme catalyses 6 Fe(III)-[cytochrome c] + NH4(+) + 2 H2O = 6 Fe(II)-[cytochrome c] + nitrite + 8 H(+). The protein operates within nitrogen metabolism; nitrate reduction (assimilation). Its function is as follows. Catalyzes the reduction of nitrite to ammonia, consuming six electrons in the process. This is Cytochrome c-552 from Photobacterium profundum (strain SS9).